The following is a 113-amino-acid chain: U11-theraphotoxin-Hhn1a (113 aa).

The first 21 residues, 1–21 (MNTVRVTFLLVFVLAVSLGQA), serve as a signal peptide directing secretion. The propeptide occupies 22-74 (DKDENRMEMQEKTEQGKSYLDFAENLLLQKLEELEAKLPEEDSEESRNSRQKR). The span at 58-69 (KLPEEDSEESRN) shows a compositional bias: basic and acidic residues. A disordered region spans residues 58–82 (KLPEEDSEESRNSRQKRCIGEGVPC). 3 cysteine pairs are disulfide-bonded: cysteine 75–cysteine 90, cysteine 82–cysteine 95, and cysteine 89–cysteine 110.

This sequence belongs to the neurotoxin 14 (magi-1) family. 01 (HNTX-16) subfamily. As to expression, expressed by the venom gland.

Its subcellular location is the secreted. In terms of biological role, probable ion channel inhibitor. The chain is U11-theraphotoxin-Hhn1a from Cyriopagopus hainanus (Chinese bird spider).